Reading from the N-terminus, the 303-residue chain is Coenzyme PQQ synthesis protein B (303 aa).

The protein belongs to the PqqB family.

Its pathway is cofactor biosynthesis; pyrroloquinoline quinone biosynthesis. Functionally, may be involved in the transport of PQQ or its precursor to the periplasm. The polypeptide is Coenzyme PQQ synthesis protein B (Pseudomonas putida (strain ATCC 47054 / DSM 6125 / CFBP 8728 / NCIMB 11950 / KT2440)).